A 234-amino-acid chain; its full sequence is Purine nucleoside phosphorylase DeoD-type (234 aa).

H4 contributes to the a purine D-ribonucleoside binding site. Phosphate-binding positions include G20, R24, R43, and 87-90; that span reads RIGT. A purine D-ribonucleoside-binding positions include 179 to 181 and 203 to 204; these read EME and SD. D204 functions as the Proton donor in the catalytic mechanism.

The protein belongs to the PNP/UDP phosphorylase family. As to quaternary structure, homohexamer; trimer of homodimers.

The catalysed reaction is a purine D-ribonucleoside + phosphate = a purine nucleobase + alpha-D-ribose 1-phosphate. It carries out the reaction a purine 2'-deoxy-D-ribonucleoside + phosphate = a purine nucleobase + 2-deoxy-alpha-D-ribose 1-phosphate. Catalyzes the reversible phosphorolytic breakdown of the N-glycosidic bond in the beta-(deoxy)ribonucleoside molecules, with the formation of the corresponding free purine bases and pentose-1-phosphate. The sequence is that of Purine nucleoside phosphorylase DeoD-type from Helicobacter pylori (strain Shi470).